Consider the following 305-residue polypeptide: D-alanine--D-alanine ligase (305 aa).

One can recognise an ATP-grasp domain in the interval 104–300 (RALFASAGIP…FPELVRWMVE (197 aa)). Residue 131-181 (LPRPFVVKPLNEGSSVGVFIVRDNQPSPLPDWPFDADEVLVESFIPGRELT) coordinates ATP. Aspartate 249, glutamate 267, and asparagine 269 together coordinate Mg(2+).

This sequence belongs to the D-alanine--D-alanine ligase family. The cofactor is Mg(2+). It depends on Mn(2+) as a cofactor.

It localises to the cytoplasm. It catalyses the reaction 2 D-alanine + ATP = D-alanyl-D-alanine + ADP + phosphate + H(+). It participates in cell wall biogenesis; peptidoglycan biosynthesis. Its function is as follows. Cell wall formation. The protein is D-alanine--D-alanine ligase of Paramagnetospirillum magneticum (strain ATCC 700264 / AMB-1) (Magnetospirillum magneticum).